Consider the following 428-residue polypeptide: CinA-like protein (428 aa).

Belongs to the CinA family.

The sequence is that of CinA-like protein from Endomicrobium trichonymphae.